Here is a 323-residue protein sequence, read N- to C-terminus: Ankyrin repeat and SOCS box protein 11 (323 aa).

ANK repeat units lie at residues 64–93 (ADRS…NVNL), 97–126 (NRVS…HVNG), 130–159 (HGAT…KAQL), 162–191 (HLAS…NIDH), 195–224 (QLGT…SVDH), and 227–256 (WLDT…NLKR). The region spanning 273-323 (SVEQALLLREGPPALSQLCRLCVRKCLGRACHQAIHKLHLPEPLERFLLYQ) is the SOCS box domain.

Belongs to the ankyrin SOCS box (ASB) family. In terms of assembly, substrate-recognition component of the ECS(ASB11) complex, composed of ASB11, CUL5, ELOB, ELOC and RNF7/RBX2.

It localises to the endoplasmic reticulum. It functions in the pathway protein modification; protein ubiquitination. Its function is as follows. Substrate-recognition component of a cullin-5-RING E3 ubiquitin-protein ligase complex (ECS complex, also named CRL5 complex), which mediates the ubiquitination and subsequent proteasomal degradation of target proteins, such as BIK, DIRAS2 and RPN1. The ECS(ASB11) complex acts as a regulator of the endoplasmic reticulum unfolded protein response by mediating ubiquitination and degradation of BIK. This chain is Ankyrin repeat and SOCS box protein 11, found in Homo sapiens (Human).